Reading from the N-terminus, the 302-residue chain is Probable alpha-L-glutamate ligase (302 aa).

Residues 112–294 (LQLLLKAGIP…IAAEIIDYIE (183 aa)) enclose the ATP-grasp domain. ATP contacts are provided by residues K148, 185 to 186 (DF), D194, and 218 to 220 (RAN). Mg(2+) is bound by residues D255, E267, and N269. The Mn(2+) site is built by D255, E267, and N269.

Belongs to the RimK family. Requires Mg(2+) as cofactor. Mn(2+) is required as a cofactor.

This Haemophilus influenzae (strain ATCC 51907 / DSM 11121 / KW20 / Rd) protein is Probable alpha-L-glutamate ligase.